The chain runs to 438 residues: Transposon Ty2-LR1 Gag polyprotein (438 aa).

Polar residues-rich tracts occupy residues 1–11, 19–39, and 49–60; these read MESQQLHQNPH, ASVT…SASN, and KVNSQQETTPGT. Disordered stretches follow at residues 1-86, 364-397, and 419-438; these read MESQ…GQYQ, KNVS…AKAH, and SSQY…TERI. The segment at 295 to 397 is RNA-binding; it reads ENNINVSDRL…SSKPRAAKAH (103 aa). Positions 369 to 381 are enriched in low complexity; the sequence is TSPNTTNTKVTTR.

Homotrimer.

It localises to the cytoplasm. Capsid protein (CA) is the structural component of the virus-like particle (VLP), forming the shell that encapsulates the retrotransposons dimeric RNA genome. The particles are assembled from trimer-clustered units and there are holes in the capsid shells that allow for the diffusion of macromolecules. CA also has nucleocapsid-like chaperone activity, promoting primer tRNA(i)-Met annealing to the multipartite primer-binding site (PBS), dimerization of Ty2 RNA and initiation of reverse transcription. This Saccharomyces cerevisiae (strain ATCC 204508 / S288c) (Baker's yeast) protein is Transposon Ty2-LR1 Gag polyprotein (TY2A-LR1).